The primary structure comprises 465 residues: Ribulose bisphosphate carboxylase large chain (465 aa).

N6,N6,N6-trimethyllysine is present on K4. Substrate contacts are provided by X113 and T163. K165 serves as the catalytic Proton acceptor. Residue K167 participates in substrate binding. Positions 191, 193, and 194 each coordinate Mg(2+). K191 is modified (N6-carboxylysine). The active-site Proton acceptor is H284. The substrate site is built by R285, H317, and S369.

Belongs to the RuBisCO large chain family. Type I subfamily. Heterohexadecamer of 8 large chains and 8 small chains; disulfide-linked. The disulfide link is formed within the large subunit homodimers. The cofactor is Mg(2+). Post-translationally, the disulfide bond which can form in the large chain dimeric partners within the hexadecamer appears to be associated with oxidative stress and protein turnover.

It is found in the plastid. Its subcellular location is the chloroplast. It carries out the reaction 2 (2R)-3-phosphoglycerate + 2 H(+) = D-ribulose 1,5-bisphosphate + CO2 + H2O. It catalyses the reaction D-ribulose 1,5-bisphosphate + O2 = 2-phosphoglycolate + (2R)-3-phosphoglycerate + 2 H(+). RuBisCO catalyzes two reactions: the carboxylation of D-ribulose 1,5-bisphosphate, the primary event in carbon dioxide fixation, as well as the oxidative fragmentation of the pentose substrate in the photorespiration process. Both reactions occur simultaneously and in competition at the same active site. This is Ribulose bisphosphate carboxylase large chain from Cornus obliqua (Silky dogwood).